The following is a 299-amino-acid chain: Ribosomal RNA small subunit methyltransferase H (299 aa).

Residues 36 to 38 (GGH), Asp-55, Asp-103, and Gln-110 each bind S-adenosyl-L-methionine. Basic and acidic residues-rich tracts occupy residues 268–282 (KPVR…ENPR) and 289–299 (RAAERIEKGGD). Positions 268 to 299 (KPVRPSEEEIRENPRARSGRLRAAERIEKGGD) are disordered.

Belongs to the methyltransferase superfamily. RsmH family.

It localises to the cytoplasm. It carries out the reaction cytidine(1402) in 16S rRNA + S-adenosyl-L-methionine = N(4)-methylcytidine(1402) in 16S rRNA + S-adenosyl-L-homocysteine + H(+). Specifically methylates the N4 position of cytidine in position 1402 (C1402) of 16S rRNA. In Thermotoga sp. (strain RQ2), this protein is Ribosomal RNA small subunit methyltransferase H.